We begin with the raw amino-acid sequence, 327 residues long: MSSNDSNDTDKQHTRLDPTGVDDAYIPPEQPETKHHRFKISRDTLRNHFIAAVGEFCGTFMFLWCAYVICNVANHDVALVAAPDGSHPGQLIMIAIGFGFSVMFSIWCFAGVSGGALNPAVSLSLCLARAVSPTRCVVMWVSQIVAGMAAGGAASAMTPGEVLFANSLGLGCSRTRGLFLEMFGTAILCLTVLMTAVEKRETNFMAALPIGISLFIAHVALTAYTGTGVNPARSLGAAVAARYFPHYHWIYWIGPLLGSILAWSVWQLLQILDYTTYVTAEKAASTKEKAQKKVKPAVPLLWLKSNFPLLFFISRSLALNVIIFGKN.

The disordered stretch occupies residues 1 to 34; that stretch reads MSSNDSNDTDKQHTRLDPTGVDDAYIPPEQPETK. Topologically, residues 1 to 48 are cytoplasmic; sequence MSSNDSNDTDKQHTRLDPTGVDDAYIPPEQPETKHHRFKISRDTLRNH. A helical membrane pass occupies residues 49–69; that stretch reads FIAAVGEFCGTFMFLWCAYVI. Over 70–91 the chain is Extracellular; that stretch reads CNVANHDVALVAAPDGSHPGQL. The helical transmembrane segment at 92–112 threads the bilayer; the sequence is IMIAIGFGFSVMFSIWCFAGV. Residues 113–136 are Cytoplasmic-facing; sequence SGGALNPAVSLSLCLARAVSPTRC. An NPA 1 motif is present at residues 118 to 120; the sequence is NPA. A helical membrane pass occupies residues 137-157; that stretch reads VVMWVSQIVAGMAAGGAASAM. Residues 158 to 176 lie on the Extracellular side of the membrane; the sequence is TPGEVLFANSLGLGCSRTR. A helical membrane pass occupies residues 177 to 197; that stretch reads GLFLEMFGTAILCLTVLMTAV. Topologically, residues 198-203 are cytoplasmic; sequence EKRETN. Residues 204–224 traverse the membrane as a helical segment; the sequence is FMAALPIGISLFIAHVALTAY. Residues 225-248 are Extracellular-facing; it reads TGTGVNPARSLGAAVAARYFPHYH. An NPA 2 motif is present at residues 230-232; that stretch reads NPA. Residues 249 to 269 traverse the membrane as a helical segment; the sequence is WIYWIGPLLGSILAWSVWQLL. The Cytoplasmic portion of the chain corresponds to 270–327; sequence QILDYTTYVTAEKAASTKEKAQKKVKPAVPLLWLKSNFPLLFFISRSLALNVIIFGKN.

The protein belongs to the MIP/aquaporin (TC 1.A.8) family.

It localises to the endoplasmic reticulum membrane. Its subcellular location is the cell membrane. Water channel required to facilitate the transport of water across membranes. Involved in sporulation, freeze tolerance and osmotolerance. Is non-functional in most laboratory strains. This Saccharomyces cerevisiae (Baker's yeast) protein is Aquaporin-1 (AQY1).